Consider the following 510-residue polypeptide: uncharacterized protein (510 aa).

Disordered stretches follow at residues 1–154 (MGSP…ATFL), 208–227 (DGNH…GDLA), 234–276 (TRES…QGIL), and 368–480 (NFYT…GCPR). Position 43 is a phosphoserine (serine 43). Over residues 50-60 (PLVSQQDTSEA) the composition is skewed to polar residues. Residues 78 to 92 (EEERLGSPEDEKMDG) are compositionally biased toward basic and acidic residues. At serine 84 the chain carries Phosphoserine. Composition is skewed to polar residues over residues 97-109 (SQPS…QVAN) and 118-135 (QPSS…SNRR). Phosphoserine is present on serine 120. Low complexity predominate over residues 139 to 151 (ASGSEEAKAASAA). The segment covering 243-255 (SSLLTTTRGLTSG) has biased composition (low complexity). Residues 379-395 (RTKELQLVAKEDTDSTR) show a composition bias toward basic and acidic residues. Polar residues predominate over residues 414–441 (SVHQEFSSGDINTRSLQDPGNSQSSGLS).

This is an uncharacterized protein from Rattus norvegicus (Rat).